The chain runs to 1050 residues: DNA ligase 4 (1050 aa).

The interval 1–22 (MNTNRRSRSPDEEALEEDQHQY) is disordered. E329, K331, L332, R336, E398, F438, E498, K503, K520, and K522 together coordinate ATP. Residue K331 is the N6-AMP-lysine intermediate of the active site. E398 lines the Mg(2+) pocket. E498 is a Mg(2+) binding site. Basic and acidic residues predominate over residues 691–702 (QEQERKKMEMEN). Residues 691–711 (QEQERKKMEMENRKRKPATKR) are disordered. BRCT domains lie at 742–840 (ASKR…KENK) and 936–1049 (LRSF…EYVA).

It belongs to the ATP-dependent DNA ligase family. Requires Mg(2+) as cofactor.

It is found in the nucleus. The catalysed reaction is ATP + (deoxyribonucleotide)n-3'-hydroxyl + 5'-phospho-(deoxyribonucleotide)m = (deoxyribonucleotide)n+m + AMP + diphosphate.. Its function is as follows. DNA ligase involved in DNA non-homologous end joining (NHEJ); required for double-strand break (DSB) repair. The polypeptide is DNA ligase 4 (mus-53) (Neurospora crassa (strain ATCC 24698 / 74-OR23-1A / CBS 708.71 / DSM 1257 / FGSC 987)).